Reading from the N-terminus, the 347-residue chain is S-adenosylmethionine:tRNA ribosyltransferase-isomerase (347 aa).

This sequence belongs to the QueA family. Monomer.

The protein resides in the cytoplasm. It carries out the reaction 7-aminomethyl-7-carbaguanosine(34) in tRNA + S-adenosyl-L-methionine = epoxyqueuosine(34) in tRNA + adenine + L-methionine + 2 H(+). The protein operates within tRNA modification; tRNA-queuosine biosynthesis. Transfers and isomerizes the ribose moiety from AdoMet to the 7-aminomethyl group of 7-deazaguanine (preQ1-tRNA) to give epoxyqueuosine (oQ-tRNA). In Xylella fastidiosa (strain M12), this protein is S-adenosylmethionine:tRNA ribosyltransferase-isomerase.